We begin with the raw amino-acid sequence, 190 residues long: C-type lectin domain family 5 member A (190 aa).

Over 1–4 (MNWH) the chain is Cytoplasmic. The helical; Signal-anchor for type II membrane protein transmembrane segment at 5-25 (MIISGLIVVVIKVVGMTFFLL) threads the bilayer. The Extracellular segment spans residues 26 to 190 (YFPQVFGKSN…YRWICEMNAK (165 aa)). Residues Asn-51, Asn-146, and Asn-153 are each glycosylated (N-linked (GlcNAc...) asparagine). Residues 80–186 (HQGKCFFFSF…CEVSYRWICE (107 aa)) form the C-type lectin domain. Cystine bridges form between Cys-101–Cys-185 and Cys-163–Cys-177.

In terms of assembly, monomer. Homodimer. The majority of CLEC5A is expressed as a monomeric form on macrophages. Interacts with TYROBP/DAP12. The interaction with TYROBP is required for CLEC5 cell surface expression. Interacts with HCST/DAP10. Forms a CLEC5A/TYROBP/HCST trimolecular complex depending almost solely on TYROBP. N-glycosylated. Contains sialic acid residues. Strong expression in bone marrow cells and thioglycollate-induced neutrophils (at protein level). Expressed on granulocytes and monocytes from bone marrow and peripheral blood. Expressed in macrophage cell line J-774, but not in T-cell lines, B-cell lines, or mast cell lines.

The protein resides in the cell membrane. Functionally, functions as a positive regulator of osteoclastogenesis. Cell surface receptor that signals via TYROBP. Regulates inflammatory responses. This is C-type lectin domain family 5 member A (Clec5a) from Mus musculus (Mouse).